The chain runs to 910 residues: MQDKYNHTEVERAAHAHWNANDAYRVTEDQAKPKFYACSMLPYPSGKLHMGHVRNYTINDMLTRSLRMKGHNVLMPMGWDAFGLPAENAALKNGVPPAQWTYDNIAYMKKQMQAMGLAIDWSREVATCDPDYYKWNQWLFLKMLDKGIAYRKTQVVNWDPVDQTVLANEQVIDGRGWRTGALVEKREIPGYYLKITDYAQELLDHVQIGNEKATLTGWPDKVRLMQENWIGKSAGVRFAFPHDIRNAAGERIQDGKLYVFTTRADTIMGVTFCAVAPEHPLAQHAAASNAPLAAFIEECKKGGTTEAELALKEKEGMPTGLFVTHPLTGEQVEVWVGNYVLMSYGDGAVMGVPAHDERDFAFALKYQLPIKQVVLVDGETFDFHQWQDWYGDKERGVTINSDNFSGLSYQDAVAAVAHALAEKGLGELKTTWRLRDWGISRQRYWGTPIPIIHCESCGAVPVPEKDLPVVLPQDLVPDGSGNPLAKCEAFLKVDCPCCGKPARRETDTMDTFVDSSWYFMRYCDPKNRDAMVAGGTDYWMRDQKAATGGSGMDQYIGGIEHAILHLLYARFWTKVMRDLGLVKVDEPFTKLLTQGMVLNHIYSRRTAKGAKDYFWPHDVEHVYDEAGKIVGAKLKNPAESGDGLLPVGTPIDYEGVGTMSKSKNNGVDPQQLIEKYGADTARLYTMFTAPPELTLEWNDAAVEGSYRFLRRVWNFGVKLSAIDKDAALASVAGAASLKDVQFGKEAKALRLEIHTVLKQVDYDYQRMQYNTVVSGAMKMINALEDFKATDSAGAQVALIEGFGILLRVLYPATPHIAHVLWDELGYAGTLGDLLDAAWPQVAPDALVQDELELMLQVNGKLRGAIRVAASADKAAIEQAALASEDFQKFAEGKAPKKVIIVPGRLVNVVV.

The 'HIGH' region signature appears at 42 to 52 (PYPSGKLHMGH). A 'KMSKS' region motif is present at residues 658–662 (TMSKS). K661 lines the ATP pocket.

Belongs to the class-I aminoacyl-tRNA synthetase family.

It localises to the cytoplasm. The catalysed reaction is tRNA(Leu) + L-leucine + ATP = L-leucyl-tRNA(Leu) + AMP + diphosphate. The protein is Leucine--tRNA ligase of Acidovorax ebreus (strain TPSY) (Diaphorobacter sp. (strain TPSY)).